The sequence spans 768 residues: DNA topoisomerase 4 subunit A (768 aa).

A Topo IIA-type catalytic domain is found at 38–521; sequence LPEVSDGQKP…AGRAVLTQTA (484 aa). Tyr-126 serves as the catalytic O-(5'-phospho-DNA)-tyrosine intermediate.

The protein belongs to the type II topoisomerase GyrA/ParC subunit family. ParC type 1 subfamily. In terms of assembly, heterotetramer composed of ParC and ParE.

It localises to the cell membrane. It catalyses the reaction ATP-dependent breakage, passage and rejoining of double-stranded DNA.. Functionally, topoisomerase IV is essential for chromosome segregation. It relaxes supercoiled DNA. Performs the decatenation events required during the replication of a circular DNA molecule. The polypeptide is DNA topoisomerase 4 subunit A (Neisseria gonorrhoeae).